A 320-amino-acid chain; its full sequence is Cytochrome c biogenesis protein CcsA (320 aa).

7 consecutive transmembrane segments (helical) span residues 14–34, 68–88, 101–121, 146–166, 226–246, 260–277, and 289–309; these read VLLLGLAAFALLLTALPWCFW, GHFPISNLYESLCFLAWACTL, LVAASATPMGLGCIAFASFAL, VIMVSYAALLVGSLLSVAVLM, TITVGFLLLTVGIISGAVWAN, TWALICWLVYAAYLHTRL, and VASLGLVVIVVCYIGVNLLGI.

It belongs to the CcmF/CycK/Ccl1/NrfE/CcsA family. As to quaternary structure, may interact with ccs1.

Its subcellular location is the cellular thylakoid membrane. Its function is as follows. Required during biogenesis of c-type cytochromes (cytochrome c6 and cytochrome f) at the step of heme attachment. The protein is Cytochrome c biogenesis protein CcsA of Synechococcus sp. (strain WH7803).